Reading from the N-terminus, the 266-residue chain is Probable dihydroorotate dehydrogenase B (NAD(+)), electron transfer subunit (266 aa).

One can recognise an FAD-binding FR-type domain in the interval 5–99; sequence NVPEVLEIKR…RGPYGRGFEL (95 aa). [2Fe-2S] cluster is bound by residues C217, C222, C225, and C235.

The protein belongs to the PyrK family. As to quaternary structure, heterotetramer of 2 PyrK and 2 PyrD type B subunits. The cofactor is [2Fe-2S] cluster. FAD serves as cofactor.

Its pathway is pyrimidine metabolism; UMP biosynthesis via de novo pathway; orotate from (S)-dihydroorotate (NAD(+) route): step 1/1. Functionally, responsible for channeling the electrons from the oxidation of dihydroorotate from the FMN redox center in the PyrD type B subunit to the ultimate electron acceptor NAD(+). The chain is Probable dihydroorotate dehydrogenase B (NAD(+)), electron transfer subunit from Methanothermobacter thermautotrophicus (strain ATCC 29096 / DSM 1053 / JCM 10044 / NBRC 100330 / Delta H) (Methanobacterium thermoautotrophicum).